The sequence spans 311 residues: Acetyl-coenzyme A carboxylase carboxyl transferase subunit beta (311 aa).

In terms of domain architecture, CoA carboxyltransferase N-terminal spans L27–G296. Residues C31, C34, C50, and C53 each contribute to the Zn(2+) site. A C4-type zinc finger spans residues C31 to C53. Over residues A286–P299 the composition is skewed to low complexity. The tract at residues A286 to D311 is disordered.

This sequence belongs to the AccD/PCCB family. Acetyl-CoA carboxylase is a heterohexamer composed of biotin carboxyl carrier protein (AccB), biotin carboxylase (AccC) and two subunits each of ACCase subunit alpha (AccA) and ACCase subunit beta (AccD). Requires Zn(2+) as cofactor.

The protein resides in the cytoplasm. It catalyses the reaction N(6)-carboxybiotinyl-L-lysyl-[protein] + acetyl-CoA = N(6)-biotinyl-L-lysyl-[protein] + malonyl-CoA. It participates in lipid metabolism; malonyl-CoA biosynthesis; malonyl-CoA from acetyl-CoA: step 1/1. Its function is as follows. Component of the acetyl coenzyme A carboxylase (ACC) complex. Biotin carboxylase (BC) catalyzes the carboxylation of biotin on its carrier protein (BCCP) and then the CO(2) group is transferred by the transcarboxylase to acetyl-CoA to form malonyl-CoA. This Alkalilimnicola ehrlichii (strain ATCC BAA-1101 / DSM 17681 / MLHE-1) protein is Acetyl-coenzyme A carboxylase carboxyl transferase subunit beta.